Consider the following 168-residue polypeptide: Large ribosomal subunit protein uL10 (168 aa).

It belongs to the universal ribosomal protein uL10 family. Part of the ribosomal stalk of the 50S ribosomal subunit. The N-terminus interacts with L11 and the large rRNA to form the base of the stalk. The C-terminus forms an elongated spine to which L12 dimers bind in a sequential fashion forming a multimeric L10(L12)X complex.

In terms of biological role, forms part of the ribosomal stalk, playing a central role in the interaction of the ribosome with GTP-bound translation factors. The polypeptide is Large ribosomal subunit protein uL10 (rplJ) (Mycoplasmopsis pulmonis (strain UAB CTIP) (Mycoplasma pulmonis)).